Reading from the N-terminus, the 348-residue chain is Dihydroorotase (348 aa).

Zn(2+) contacts are provided by H17 and H19. Substrate is bound by residues 19–21 and N45; that span reads HLR. Positions 103, 140, and 178 each coordinate Zn(2+). The residue at position 103 (K103) is an N6-carboxylysine. H140 is a substrate binding site. Residue L223 participates in substrate binding. D251 contacts Zn(2+). D251 is a catalytic residue. 2 residues coordinate substrate: H255 and A267.

The protein belongs to the metallo-dependent hydrolases superfamily. DHOase family. Class II DHOase subfamily. Homodimer. Requires Zn(2+) as cofactor.

The enzyme catalyses (S)-dihydroorotate + H2O = N-carbamoyl-L-aspartate + H(+). Its pathway is pyrimidine metabolism; UMP biosynthesis via de novo pathway; (S)-dihydroorotate from bicarbonate: step 3/3. Functionally, catalyzes the reversible cyclization of carbamoyl aspartate to dihydroorotate. This Salmonella paratyphi C (strain RKS4594) protein is Dihydroorotase.